Consider the following 214-residue polypeptide: Ornithine decarboxylase antizyme 1 (214 aa).

It belongs to the ODC antizyme family. Interacts with ODC1 and thereby sterically blocks ODC homodimerization.

Functionally, ornithine decarboxylase (ODC) antizyme protein that negatively regulates ODC activity and intracellular polyamine biosynthesis and uptake in response to increased intracellular polyamine levels. Binds to ODC monomers, inhibiting the assembly of the functional ODC homodimer, and targets the monomers for ubiquitin-independent proteolytic destruction by the 26S proteasome. The sequence is that of Ornithine decarboxylase antizyme 1 (oaz1a) from Danio rerio (Zebrafish).